A 687-amino-acid chain; its full sequence is MEWLIFSLLLLAVSASGQLCPKRCMCQNLSPSLAILCAKTGLLFVPTVIDRRTVELRLTENFITAVKRRDFANMTSLLHLTLSRNTISQIMPYTFADLKRLRALHLDSNRLSVITDDHFRGLTNLRHLILANNQLHNISPHAFDDFLGTLEDLDLSYNNLVDIPWDTIGRLTNVNTLNMDHNLIEHVPLGIFSNLHKLARLDMTSNKLKKIPPDPLFLRIPVYAKSKGSPLSSLVLSFGGNPLHCNCELLWLRRLTREDDLETCASPPDLTAKYFWTIPEEEFICDPPVITRKSPKTFAMEGQPTSLKCKANGDPDPDVHWISPEGRLIANTSRTLSFSNGSLEINITSLKDTGIFTCIASNAAGESTGTVELVVSPLPHLANSTNRIREPDPGPSDILTSAKSTSSVSNETRSQERKVVLAELSANSALIRWPSQQHFPGIRMYQIQYNSSVDDTLVYRMIPSTSFDFLVRDLVSGREYDLCVLAVYDDGVTSLTATRQVGCVTFVTETEFSQCQSLRSHFLGGTMIIIIGGIIVASVLVFIIILMIRYKVYSQHGADSGKGTAMTNVRSQTNGGQAAGQVPRSSSKIVEGQEASGGSLGGAANIKDSTALVLVTDSETAVQISEISSEDIVSPTQRHHPRTCIELKRRPSLSCKEGTSSDTQEDTASPQVSDEKKAQRDWSDFKI.

An N-terminal signal peptide occupies residues 1-17 (MEWLIFSLLLLAVSASG). Residues 18 to 51 (QLCPKRCMCQNLSPSLAILCAKTGLLFVPTVIDR) form the LRRNT domain. Residues 18-527 (QLCPKRCMCQ…LRSHFLGGTM (510 aa)) are Extracellular-facing. LRR repeat units follow at residues 52–73 (RTVE…DFAN), 76–97 (SLLH…TFAD), 100–121 (RLRA…HFRG), 124–145 (NLRH…AFDD), 149–170 (TLED…TIGR), 173–194 (NVNT…IFSN), and 197–218 (KLAR…PLFL). Residue Asn73 is glycosylated (N-linked (GlcNAc...) asparagine). The LRRCT domain occupies 241 to 287 (NPLHCNCELLWLRRLTREDDLETCASPPDLTAKYFWTIPEEEFICDP). Positions 287–376 (PPVITRKSPK…STGTVELVVS (90 aa)) constitute an Ig-like domain. Cys309 and Cys358 are disulfide-bonded. N-linked (GlcNAc...) asparagine glycosylation is found at Asn331, Asn340, Asn346, Asn383, Asn410, and Asn450. The disordered stretch occupies residues 384–412 (STNRIREPDPGPSDILTSAKSTSSVSNET). Over residues 398-412 (ILTSAKSTSSVSNET) the composition is skewed to polar residues. In terms of domain architecture, Fibronectin type-III spans 415–510 (QERKVVLAEL…VGCVTFVTET (96 aa)). A helical transmembrane segment spans residues 528–548 (IIIIGGIIVASVLVFIIILMI). Residues 549-687 (RYKVYSQHGA…AQRDWSDFKI (139 aa)) are Cytoplasmic-facing. 2 disordered regions span residues 563–601 (GTAM…GSLG) and 630–687 (EDIV…DFKI). 2 stretches are compositionally biased toward polar residues: residues 565–576 (AMTNVRSQTNGG) and 657–672 (EGTS…SPQV). Basic and acidic residues predominate over residues 673–687 (SDEKKAQRDWSDFKI).

This sequence belongs to the LRFN family.

Its subcellular location is the membrane. The protein localises to the synapse. Functionally, may be involved in the regulation of excitatory synapses. The sequence is that of Leucine-rich repeat and fibronectin type III domain-containing protein 1-like protein (lrfn1l) from Danio rerio (Zebrafish).